The chain runs to 305 residues: UPF0612 protein C337.02c (305 aa).

Coiled coils occupy residues 27–63 and 120–207; these read IERY…MKYE and NDMN…DARS.

Belongs to the UPF0612 family.

This chain is UPF0612 protein C337.02c, found in Schizosaccharomyces pombe (strain 972 / ATCC 24843) (Fission yeast).